Consider the following 255-residue polypeptide: Menaquinol:cytochrome c reductase cytochrome c subunit (255 aa).

The next 3 membrane-spanning stretches (helical) occupy residues tryptophan 46–valine 62, valine 104–leucine 124, and valine 137–valine 157. Residues aspartate 178–threonine 253 enclose the Cytochrome c domain. The heme c site is built by cysteine 192, cysteine 195, and histidine 196.

Belongs to the cytochrome b family. In terms of assembly, the main subunits of the menaquinol:cytochrome c complex are a Rieske-type iron-sulfur protein (QcrA), a cytochrome b (QcrB) and a cytochrome c (QcrC). It depends on heme c as a cofactor.

It localises to the cell membrane. In terms of biological role, component of the menaquinol:cytochrome c reductase complex. The polypeptide is Menaquinol:cytochrome c reductase cytochrome c subunit (qcrC) (Bacillus subtilis (strain 168)).